The chain runs to 126 residues: Small ribosomal subunit protein uS13c (126 aa).

The interval 97–126 (PLRGQRTRTNARTRRGGKKTVAGKKKAPRK) is disordered. The span at 101–126 (QRTRTNARTRRGGKKTVAGKKKAPRK) shows a compositional bias: basic residues.

Belongs to the universal ribosomal protein uS13 family. Part of the 30S ribosomal subunit.

It localises to the plastid. The protein resides in the chloroplast. Located at the top of the head of the 30S subunit, it contacts several helices of the 16S rRNA. The sequence is that of Small ribosomal subunit protein uS13c from Pyropia yezoensis (Susabi-nori).